The following is a 349-amino-acid chain: MELAVGNLSEGNASWPEPPAPEPGPLFGIGVENFVTLVVFGLIFALGVLGNSLVITVLARSKPGKPRSTTNLFILNLSIADLAYLLFCIPFQATVYALPTWVLGAFICKFIHYFFTVSMLVSIFTLAAMSVDRYVAIVHSRRSSSLRVSRNALLGVGCIWALSIAMASPVAYHQGLFHPRASNQTFCWEQWPDPRHKKAYVVCTFVFGYLLPLLLICFCYAKVLNHLHKKLKNMSKKSEASKKKTAQTVLVVVVVFGISWLPHHIIHLWAEFGVFPLTPASFLFRITAHCLAYSNSSVNPIIYAFLSENFRKAYKQVFKCHIRKDSHLSDTKESKSRIDTPPSTNCTHV.

The Extracellular portion of the chain corresponds to 1-36; it reads MELAVGNLSEGNASWPEPPAPEPGPLFGIGVENFVT. Residues asparagine 7 and asparagine 12 are each glycosylated (N-linked (GlcNAc...) asparagine). The helical transmembrane segment at 37-57 threads the bilayer; that stretch reads LVVFGLIFALGVLGNSLVITV. Residues 58-70 are Cytoplasmic-facing; sequence LARSKPGKPRSTT. Residues 71–91 form a helical membrane-spanning segment; it reads NLFILNLSIADLAYLLFCIPF. Residues 92 to 109 lie on the Extracellular side of the membrane; sequence QATVYALPTWVLGAFICK. Cysteine 108 and cysteine 187 are oxidised to a cystine. The helical transmembrane segment at 110-131 threads the bilayer; the sequence is FIHYFFTVSMLVSIFTLAAMSV. At 132–151 the chain is on the cytoplasmic side; that stretch reads DRYVAIVHSRRSSSLRVSRN. A helical membrane pass occupies residues 152–172; that stretch reads ALLGVGCIWALSIAMASPVAY. The Extracellular segment spans residues 173-200; the sequence is HQGLFHPRASNQTFCWEQWPDPRHKKAY. A glycan (N-linked (GlcNAc...) asparagine) is linked at asparagine 183. A helical membrane pass occupies residues 201–221; the sequence is VVCTFVFGYLLPLLLICFCYA. The Cytoplasmic portion of the chain corresponds to 222–248; that stretch reads KVLNHLHKKLKNMSKKSEASKKKTAQT. The helical transmembrane segment at 249-269 threads the bilayer; sequence VLVVVVVFGISWLPHHIIHLW. Topologically, residues 270–271 are extracellular; that stretch reads AE. The helical transmembrane segment at 272–292 threads the bilayer; sequence FGVFPLTPASFLFRITAHCLA. Topologically, residues 293-349 are cytoplasmic; it reads YSNSSVNPIIYAFLSENFRKAYKQVFKCHIRKDSHLSDTKESKSRIDTPPSTNCTHV. A lipid anchor (S-palmitoyl cysteine) is attached at cysteine 320.

This sequence belongs to the G-protein coupled receptor 1 family. As to quaternary structure, interacts with GRP39 AND HTR1A. Post-translationally, palmitoylated on at least one of the three cysteine residues present in the C-terminal part.

The protein resides in the cell membrane. In terms of biological role, receptor for the hormone galanin. The activity of this receptor is mediated by G proteins that inhibit adenylate cyclase activity. The protein is Galanin receptor type 1 (GALR1) of Homo sapiens (Human).